A 458-amino-acid chain; its full sequence is Ammonium transporter Rh type B (458 aa).

At 1 to 11 the chain is on the cytoplasmic side; the sequence is MTDAATNMRLK. The helical transmembrane segment at 12–32 threads the bilayer; that stretch reads LPITCFILEIILIILFGTLVQ. The Extracellular portion of the chain corresponds to 33–58; sequence YDYETDAKEWHNTSHQDYENDFYFRY. An N-linked (GlcNAc...) asparagine glycan is attached at Asn44. The helical transmembrane segment at 59–79 threads the bilayer; the sequence is PSFQDVHVMIFVGFGFLMTFL. Residues 80–83 lie on the Cytoplasmic side of the membrane; that stretch reads QRYG. The helical transmembrane segment at 84-104 threads the bilayer; sequence FGSVGFNFLIAAFSLQWATLM. The Extracellular segment spans residues 105-121; sequence QGFFHGMHGGKIHIGVE. The chain crosses the membrane as a helical span at residues 122-142; that stretch reads SMINADFCTGSVLISFGAVLG. At 143-151 the chain is on the cytoplasmic side; that stretch reads KTSPIQLLT. The chain crosses the membrane as a helical span at residues 152-172; that stretch reads MAIFEVTLFAVNEFILLSLLG. Topologically, residues 173–176 are extracellular; it reads TKDA. Residues 177-197 traverse the membrane as a helical segment; it reads GGSMTIHTFGAYFGLMVTRIL. Topologically, residues 198–216 are cytoplasmic; sequence YRPNLDKSKHRNSSVYHSD. Residues 217–237 traverse the membrane as a helical segment; sequence LFAMIGTVYLWMFWPSFNSAI. The Extracellular segment spans residues 238–247; that stretch reads TAHGDDQHRT. A helical transmembrane segment spans residues 248 to 270; the sequence is ALNTYYSLAACTLATYGMSAITS. Over 271–274 the chain is Cytoplasmic; that stretch reads HDGK. The chain crosses the membrane as a helical span at residues 275–295; sequence LDMVHIQNAALAGGVAVGTAG. Residues 296-298 are Extracellular-facing; the sequence is EMM. Residues 299-319 form a helical membrane-spanning segment; sequence LTPFGSMIVGFMAGIISVLGF. Residues 320–340 lie on the Cytoplasmic side of the membrane; sequence KFLSPILEDKLKIQDTCGIHN. A helical transmembrane segment spans residues 341–361; it reads LHGMPGVLGAIVGAVTAALAT. The Extracellular segment spans residues 362–391; it reads TDVYGQGMADVFPAVADGSVNATKQGGIQA. The chain crosses the membrane as a helical span at residues 392 to 412; that stretch reads LSLAITLGIAVLGGLIVGFVL. At 413-458 the chain is on the cytoplasmic side; sequence KLPVFGTPPDTLCFEDSVYWEVPGSESPEEGELTSVKPEETEHLNS. Positions 436–458 are disordered; the sequence is GSESPEEGELTSVKPEETEHLNS. Residues 449–458 show a composition bias toward basic and acidic residues; that stretch reads KPEETEHLNS.

It belongs to the ammonium transporter (TC 2.A.49) family. Rh subfamily. Specifically expressed in the gill by pavement cells (at protein level).

The protein resides in the apicolateral cell membrane. Its subcellular location is the cytoplasmic vesicle membrane. In terms of biological role, functions as an ammonia transporter. May play a role in the elimination of ammonia in the gill. The polypeptide is Ammonium transporter Rh type B (rhbg) (Takifugu rubripes (Japanese pufferfish)).